The chain runs to 290 residues: Glutamate 5-kinase (290 aa).

Position 21 (K21) interacts with ATP. The substrate site is built by S60, D151, and N163. Position 217–223 (217–223 (TGGMFTK)) interacts with ATP.

This sequence belongs to the glutamate 5-kinase family.

The protein localises to the cytoplasm. It catalyses the reaction L-glutamate + ATP = L-glutamyl 5-phosphate + ADP. The protein operates within amino-acid biosynthesis; L-proline biosynthesis; L-glutamate 5-semialdehyde from L-glutamate: step 1/2. Its function is as follows. Catalyzes the transfer of a phosphate group to glutamate to form L-glutamate 5-phosphate. This chain is Glutamate 5-kinase, found in Leptospira interrogans serogroup Icterohaemorrhagiae serovar copenhageni (strain Fiocruz L1-130).